We begin with the raw amino-acid sequence, 364 residues long: Spermatogenesis-associated protein 22 (364 aa).

Composition is skewed to polar residues over residues 1–13, 30–48, 73–108, 137–169, and 177–189; these read MKRNLNENSTRST, QPLTSNPCTNDPGISNASD, KTVNTGQIPHSVSNSLRSQDSLSKPIQSNAGSSKSD, LMTNNGINSGPINLGAQQQKQLRVSESTNLPNQ, and QTKSSEIPGSTMR. Disordered regions lie at residues 1-51 and 70-189; these read MKRN…DNYD and PLTK…STMR.

Component of a multiprotein complex with MEIOB and RPA2. Interacts with MEIOB. Interacts with the complex BRME1:HSF2BP:BRCA2.

The protein localises to the chromosome. In terms of biological role, meiosis-specific protein required for homologous recombination in meiosis I. In Bos taurus (Bovine), this protein is Spermatogenesis-associated protein 22 (SPATA22).